A 494-amino-acid chain; its full sequence is NADH-quinone oxidoreductase subunit N (494 aa).

14 consecutive transmembrane segments (helical) span residues 13–33, 43–63, 82–102, 117–137, 138–158, 169–189, 209–229, 243–263, 277–297, 311–331, 332–352, 380–400, 412–432, and 461–481; these read LIAL…MLAI, FVLT…AMGV, MALV…YLGG, LLIL…HLVG, LFIG…YAFF, YMVL…LLYA, LLVE…LSLV, PAPV…AVLL, LNEL…LLAL, IAHF…AVEA, IGVY…VITL, AVLT…GFIG, QLWW…FYYL, and IMLL…QPLL.

The protein belongs to the complex I subunit 2 family. NDH-1 is composed of 13 different subunits. Subunits NuoA, H, J, K, L, M, N constitute the membrane sector of the complex.

The protein resides in the cell inner membrane. The catalysed reaction is a quinone + NADH + 5 H(+)(in) = a quinol + NAD(+) + 4 H(+)(out). In terms of biological role, NDH-1 shuttles electrons from NADH, via FMN and iron-sulfur (Fe-S) centers, to quinones in the respiratory chain. The immediate electron acceptor for the enzyme in this species is believed to be ubiquinone. Couples the redox reaction to proton translocation (for every two electrons transferred, four hydrogen ions are translocated across the cytoplasmic membrane), and thus conserves the redox energy in a proton gradient. The chain is NADH-quinone oxidoreductase subunit N from Ectopseudomonas mendocina (strain ymp) (Pseudomonas mendocina).